Consider the following 173-residue polypeptide: Crossover junction endodeoxyribonuclease RuvC (173 aa).

Active-site residues include Asp-11, Glu-71, and Asp-143. Residues Asp-11, Glu-71, and Asp-143 each coordinate Mg(2+).

The protein belongs to the RuvC family. As to quaternary structure, homodimer which binds Holliday junction (HJ) DNA. The HJ becomes 2-fold symmetrical on binding to RuvC with unstacked arms; it has a different conformation from HJ DNA in complex with RuvA. In the full resolvosome a probable DNA-RuvA(4)-RuvB(12)-RuvC(2) complex forms which resolves the HJ. Mg(2+) is required as a cofactor.

It is found in the cytoplasm. The catalysed reaction is Endonucleolytic cleavage at a junction such as a reciprocal single-stranded crossover between two homologous DNA duplexes (Holliday junction).. The RuvA-RuvB-RuvC complex processes Holliday junction (HJ) DNA during genetic recombination and DNA repair. Endonuclease that resolves HJ intermediates. Cleaves cruciform DNA by making single-stranded nicks across the HJ at symmetrical positions within the homologous arms, yielding a 5'-phosphate and a 3'-hydroxyl group; requires a central core of homology in the junction. The consensus cleavage sequence is 5'-(A/T)TT(C/G)-3'. Cleavage occurs on the 3'-side of the TT dinucleotide at the point of strand exchange. HJ branch migration catalyzed by RuvA-RuvB allows RuvC to scan DNA until it finds its consensus sequence, where it cleaves and resolves the cruciform DNA. This Brucella suis biovar 1 (strain 1330) protein is Crossover junction endodeoxyribonuclease RuvC.